Reading from the N-terminus, the 367-residue chain is GTPase Obg (367 aa).

Residues 1–158 (MFIDNVELTV…VQIRLELKLI (158 aa)) form the Obg domain. One can recognise an OBG-type G domain in the interval 159 to 358 (ADVGLVGFPN…LKYALYDLVK (200 aa)). GTP contacts are provided by residues 165 to 172 (GFPNVGKS), 190 to 194 (FTTLT), 212 to 215 (DIPG), 280 to 283 (TKID), and 339 to 341 (SAV). Positions 172 and 192 each coordinate Mg(2+).

The protein belongs to the TRAFAC class OBG-HflX-like GTPase superfamily. OBG GTPase family. As to quaternary structure, monomer. Mg(2+) is required as a cofactor.

Its subcellular location is the cytoplasm. Its function is as follows. An essential GTPase which binds GTP, GDP and possibly (p)ppGpp with moderate affinity, with high nucleotide exchange rates and a fairly low GTP hydrolysis rate. Plays a role in control of the cell cycle, stress response, ribosome biogenesis and in those bacteria that undergo differentiation, in morphogenesis control. The chain is GTPase Obg from Nitratiruptor sp. (strain SB155-2).